The chain runs to 575 residues: Sodium/calcium exchanger NCL2 (575 aa).

3 helical membrane-spanning segments follow: residues 69 to 89 (FLPCTTTAWGNLFLVLAYGFL), 112 to 132 (IVGGLFLPILGALPDALLILV), and 146 to 166 (VLIGMGLLAGSTVMLLTLLWG). Residue Asn179 is glycosylated (N-linked (GlcNAc...) asparagine). The next 2 membrane-spanning stretches (helical) occupy residues 210–230 (IMAISILPFIIVQIPKIFKLH) and 237–257 (VLIGLIVAALLLLSYCLYQVF). 2 EF-hand domains span residues 297-332 (PNVSVIEKLFHRIDQDNDGKLERGELQAFIVGINFE) and 337-372 (NSNLAADQVMADFDTSRNHFIEKGEFVNGMLRWLDE). Asn298 carries an N-linked (GlcNAc...) asparagine glycan. Ca(2+)-binding residues include Asp310, Asp312, Asp314, Lys316, Glu321, Asp350, Ser352, Asn354, and Glu361. Transmembrane regions (helical) follow at residues 417–437 (WTCIKAILLLLLGTAMAAASA), 457–477 (FISFIVMPLATNSSEAVSAII), 494–514 (VYGGVTMNNTLCLAVFLALVY), 522–542 (FSSEVLIILLVCIIMGLFTSF), and 548–568 (LWTCFVAFLLYPLSLIMVYIL).

It belongs to the Ca(2+):cation antiporter (CaCA) (TC 2.A.19) family.

It localises to the cell membrane. May function as a sodium/calcium exchanger (NCX) and participate in the maintenance of calcium homeostasis. May play a role abiotic stress responses. This chain is Sodium/calcium exchanger NCL2, found in Oryza sativa subsp. japonica (Rice).